The primary structure comprises 98 residues: Large ribosomal subunit protein uL23 (98 aa).

Belongs to the universal ribosomal protein uL23 family. In terms of assembly, part of the 50S ribosomal subunit. Contacts protein L29, and trigger factor when it is bound to the ribosome.

Its function is as follows. One of the early assembly proteins it binds 23S rRNA. One of the proteins that surrounds the polypeptide exit tunnel on the outside of the ribosome. Forms the main docking site for trigger factor binding to the ribosome. The chain is Large ribosomal subunit protein uL23 from Methylorubrum extorquens (strain CM4 / NCIMB 13688) (Methylobacterium extorquens).